Here is a 90-residue protein sequence, read N- to C-terminus: MSSTWIKFLFILTLVLLPYSVFSVNIFAGPENVIKEPNCTMYKSKSECSNIAENPVCADDRNTYYNECYFCIEKVVEKLKYRYHGICIYK.

Residues 1–23 form the signal peptide; it reads MSSTWIKFLFILTLVLLPYSVFS. Positions 33–89 constitute a Kazal-like domain; it reads VIKEPNCTMYKSKSECSNIAENPVCADDRNTYYNECYFCIEKVVEKLKYRYHGICIY. The N-linked (GlcNAc...) asparagine glycan is linked to Asn38.

In terms of tissue distribution, luminal fluid and mucosal folds of the seminal vesicles (at protein level). Not detected in brain, heart, lung, liver, kidney, stomach, small intestine, muscle, skin, thymus, placenta or bladder.

It is found in the secreted. In terms of biological role, does not function as an inhibitor of trypsin, chymotrypsin, subtilisin or elastase. Binds sperm and enhances sperm motility. May act as a decapacitation factor, suppresses BSA-stimulated sperm capacitation and blocks sperm-oocyte interactions in vitro. This Mus musculus (Mouse) protein is Serine protease inhibitor kazal-like protein, minor form (Spinkl).